The following is a 350-amino-acid chain: MTQIDLAPPASSTQPRIIDTDVAIIGAGPAGLFAAFELGMLRLRAVLIDALQEVGGQCAALYPEKPIYDIPAHPAISGGDLITALERQIAPFDMPRLLSRRVETLTGTQGDFTLTTSAGDTVCARAVVLAAGAGAFGPNRPPLDGLEAFEASGAVQYYVRRREDFRGRSVVIAGGGDSAVDWALALRGIAARIFVVHRRAKFRAAPESLAQLEQAAAAGEVELVVPYQLHGLQGAEGVLSVVEVATLDGEIRRLEADCLLPFFGLSMDLGPIAEWGLALERHHITIDPSRCETNVPGIFAIGDVATYPGKLKLILQGFSEAAMAAHAIHPIVHPDQALHFEYSTSTGVPG.

Asp-49, Gln-57, Tyr-62, Val-102, Phe-136, Asp-303, and Thr-344 together coordinate FAD.

It belongs to the ferredoxin--NADP reductase type 2 family. In terms of assembly, homodimer. FAD is required as a cofactor.

It carries out the reaction 2 reduced [2Fe-2S]-[ferredoxin] + NADP(+) + H(+) = 2 oxidized [2Fe-2S]-[ferredoxin] + NADPH. This Granulibacter bethesdensis (strain ATCC BAA-1260 / CGDNIH1) protein is Ferredoxin--NADP reductase.